Consider the following 705-residue polypeptide: Elongation factor G (705 aa).

The tr-type G domain maps to 8-294 (ELYRNFGIMA…SVIDYLPSPL (287 aa)). Residues 17-24 (AHIDAGKT), 92-96 (DTPGH), and 146-149 (NKMD) contribute to the GTP site.

Belongs to the TRAFAC class translation factor GTPase superfamily. Classic translation factor GTPase family. EF-G/EF-2 subfamily.

It is found in the cytoplasm. Catalyzes the GTP-dependent ribosomal translocation step during translation elongation. During this step, the ribosome changes from the pre-translocational (PRE) to the post-translocational (POST) state as the newly formed A-site-bound peptidyl-tRNA and P-site-bound deacylated tRNA move to the P and E sites, respectively. Catalyzes the coordinated movement of the two tRNA molecules, the mRNA and conformational changes in the ribosome. The chain is Elongation factor G from Cereibacter sphaeroides (strain KD131 / KCTC 12085) (Rhodobacter sphaeroides).